The sequence spans 472 residues: Divinyl ether synthase CYP74 (472 aa).

Position 425 (C425) interacts with heme.

The protein belongs to the cytochrome P450 family. Heme serves as cofactor. In terms of tissue distribution, expressed mainly in bulbs, and at lower levels in roots.

The catalysed reaction is (13S)-hydroperoxy-(9Z,11E)-octadecadienoate = etheroleate + H2O. It catalyses the reaction (13S)-hydroperoxy-(9Z,11E,15Z)-octadecatrienoate = etherolenate + H2O. It carries out the reaction (9S)-hydroperoxy-(10E,12Z)-octadecadienoate = colneleate + H2O. The enzyme catalyses (9S)-hydroperoxy-(10E,12Z,15Z)-octadecatrienoate = colnelenate + H2O. It participates in lipid metabolism; oxylipin biosynthesis. In terms of biological role, divinyl ether synthase involved in oxylipin biosynthesis. Catalyzes the conversion of (13S)-hydroperoxy-(9Z,11E)-octadecadienoate (13-HPOD) to etheroleate and (13S)-hydroperoxy-(9Z,11E,15Z)-octadecatrienoate (13-HPOT) to etherolenate. Catalyzes the conversion of (9S)-hydroperoxy-(10E,12Z)-octadecadienoate (9-HPOD) to colneleate and (9S)-hydroperoxy-(10E,12Z,15Z)-octadecatrienoate (9-HPOT) colnelenate. The sequence is that of Divinyl ether synthase CYP74 from Allium sativum (Garlic).